Consider the following 155-residue polypeptide: 6,7-dimethyl-8-ribityllumazine synthase (155 aa).

Residues phenylalanine 24, 58-60, and 82-84 each bind 5-amino-6-(D-ribitylamino)uracil; these read AFE and VII. Residue 87–88 coordinates (2S)-2-hydroxy-3-oxobutyl phosphate; it reads ST. Residue histidine 90 is the Proton donor of the active site. Phenylalanine 115 is a 5-amino-6-(D-ribitylamino)uracil binding site. Arginine 129 is a (2S)-2-hydroxy-3-oxobutyl phosphate binding site.

It belongs to the DMRL synthase family.

It catalyses the reaction (2S)-2-hydroxy-3-oxobutyl phosphate + 5-amino-6-(D-ribitylamino)uracil = 6,7-dimethyl-8-(1-D-ribityl)lumazine + phosphate + 2 H2O + H(+). Its pathway is cofactor biosynthesis; riboflavin biosynthesis; riboflavin from 2-hydroxy-3-oxobutyl phosphate and 5-amino-6-(D-ribitylamino)uracil: step 1/2. Functionally, catalyzes the formation of 6,7-dimethyl-8-ribityllumazine by condensation of 5-amino-6-(D-ribitylamino)uracil with 3,4-dihydroxy-2-butanone 4-phosphate. This is the penultimate step in the biosynthesis of riboflavin. The protein is 6,7-dimethyl-8-ribityllumazine synthase of Chlorobium limicola (strain DSM 245 / NBRC 103803 / 6330).